The following is a 244-amino-acid chain: MKIDLNADLGEGCTSDAELLTLVSSANIACGFHAGDAQTMQACVREAIKNGVAIGAHPSFPDRKNFGRSAMQLPPETVYAQTLYQIGALATITRAQGGVMRHVKPHGMLYNQAAKEAQLADAIARAVYACDPALVLVGLAGSELIRAGKQYGLTTREEVFADRGYQADGSLVPRSQSGALIEDEEQALAQTLEMVQHGRVKSITGEWATVTAQTVCLHGDGEHALAFARRLRSAFAEKGIVVAA.

It belongs to the LamB/PxpA family. As to quaternary structure, forms a complex composed of PxpA, PxpB and PxpC.

The enzyme catalyses 5-oxo-L-proline + ATP + 2 H2O = L-glutamate + ADP + phosphate + H(+). Catalyzes the cleavage of 5-oxoproline to form L-glutamate coupled to the hydrolysis of ATP to ADP and inorganic phosphate. The polypeptide is 5-oxoprolinase subunit A (Escherichia coli O157:H7).